A 144-amino-acid chain; its full sequence is Ribonuclease VapC45 (144 aa).

Mg(2+)-binding residues include Asp-7 and Asp-102.

Belongs to the PINc/VapC protein family. It depends on Mg(2+) as a cofactor.

Toxic component of a type II toxin-antitoxin (TA) system. An RNase. Its cognate antitoxin is VapB45. This is Ribonuclease VapC45 from Mycobacterium tuberculosis (strain CDC 1551 / Oshkosh).